We begin with the raw amino-acid sequence, 204 residues long: Peptidyl-tRNA hydrolase (204 aa).

Tyr19 contacts tRNA. Residue His24 is the Proton acceptor of the active site. 3 residues coordinate tRNA: Tyr70, Asn72, and Asn118.

This sequence belongs to the PTH family. As to quaternary structure, monomer.

Its subcellular location is the cytoplasm. The enzyme catalyses an N-acyl-L-alpha-aminoacyl-tRNA + H2O = an N-acyl-L-amino acid + a tRNA + H(+). Its function is as follows. Hydrolyzes ribosome-free peptidyl-tRNAs (with 1 or more amino acids incorporated), which drop off the ribosome during protein synthesis, or as a result of ribosome stalling. Functionally, catalyzes the release of premature peptidyl moieties from peptidyl-tRNA molecules trapped in stalled 50S ribosomal subunits, and thus maintains levels of free tRNAs and 50S ribosomes. The protein is Peptidyl-tRNA hydrolase of Prochlorococcus marinus (strain SARG / CCMP1375 / SS120).